Reading from the N-terminus, the 467-residue chain is MAISYADNETIAAISTPMGTGGIGVIRISGKESLTILQTIFRPHNDSCSYRSHQMYYGQIVAADGHQLDEVLVVYMRAPKTYTCEDIVEIHCHGNFLVLQNVLELVIEKGASLAEPGEFTKRAFFNGRIDLTKAEAVIDVLSAKTRKGVDVAQEQLAGSLYRRIEPIRNALVHMRALFEVAIDFPDQSHDIVDYEQIDLQLKTEVIAPVKELLAGVDRGRIYRQGISMVIAGRPNVGKSSLLNAVLQEERALVTSIAGTTRDSIEEMVDILGMPVRIVDTAGIRRQAGEVEALGIQRAKDLINSADLVLFMVDGSRQLDQSDLELYEDIAHKPMIAVINKLDLLAEDGTAAAALLDFVPASVPRLAISAREGEGLEALKQAIFTVVTGSDTPWDEEGCAPNLRHKKSLEATLIAAERMVDDLAQGMGSSDLLSIDMQECLDQLGDIIGITTTDDVFDVIFSEFCLGK.

Residues R27, E89, and R128 each contribute to the (6S)-5-formyl-5,6,7,8-tetrahydrofolate site. Positions 225-387 (GISMVIAGRP…LKQAIFTVVT (163 aa)) constitute a TrmE-type G domain. Residue N235 participates in K(+) binding. Residues 235-240 (NVGKSS), 254-260 (TSIAGTT), 279-282 (DTAG), and 368-370 (SAR) contribute to the GTP site. S239 is a binding site for Mg(2+). Positions 254, 256, and 259 each coordinate K(+). Mg(2+) is bound at residue T260. K467 contacts (6S)-5-formyl-5,6,7,8-tetrahydrofolate.

It belongs to the TRAFAC class TrmE-Era-EngA-EngB-Septin-like GTPase superfamily. TrmE GTPase family. In terms of assembly, homodimer. Heterotetramer of two MnmE and two MnmG subunits. It depends on K(+) as a cofactor.

The protein localises to the cytoplasm. Its function is as follows. Exhibits a very high intrinsic GTPase hydrolysis rate. Involved in the addition of a carboxymethylaminomethyl (cmnm) group at the wobble position (U34) of certain tRNAs, forming tRNA-cmnm(5)s(2)U34. The sequence is that of tRNA modification GTPase MnmE from Desulfotalea psychrophila (strain LSv54 / DSM 12343).